Reading from the N-terminus, the 160-residue chain is Major strawberry allergen Fra a 1-B (160 aa).

It belongs to the BetVI family. As to quaternary structure, monomer.

The protein is Major strawberry allergen Fra a 1-B of Fragaria ananassa (Strawberry).